The following is a 486-amino-acid chain: Cysteine--tRNA ligase (486 aa).

Cys-29 is a binding site for Zn(2+). Positions 31–41 match the 'HIGH' region motif; sequence VTVYDYCHLGH. Zn(2+) is bound by residues Cys-217, His-242, and Glu-246. The short motif at 274-278 is the 'KMSKS' region element; the sequence is KMSKS. Lys-277 provides a ligand contact to ATP.

This sequence belongs to the class-I aminoacyl-tRNA synthetase family. In terms of assembly, monomer. It depends on Zn(2+) as a cofactor.

Its subcellular location is the cytoplasm. The catalysed reaction is tRNA(Cys) + L-cysteine + ATP = L-cysteinyl-tRNA(Cys) + AMP + diphosphate. The sequence is that of Cysteine--tRNA ligase from Thermosynechococcus vestitus (strain NIES-2133 / IAM M-273 / BP-1).